A 204-amino-acid chain; its full sequence is Imidazole glycerol phosphate synthase subunit HisH (204 aa).

In terms of domain architecture, Glutamine amidotransferase type-1 spans 5–204 (KVVIIDTGCA…AKLIQNFLEL (200 aa)). Cysteine 80 acts as the Nucleophile in catalysis. Active-site residues include histidine 186 and glutamate 188.

As to quaternary structure, heterodimer of HisH and HisF.

Its subcellular location is the cytoplasm. The catalysed reaction is 5-[(5-phospho-1-deoxy-D-ribulos-1-ylimino)methylamino]-1-(5-phospho-beta-D-ribosyl)imidazole-4-carboxamide + L-glutamine = D-erythro-1-(imidazol-4-yl)glycerol 3-phosphate + 5-amino-1-(5-phospho-beta-D-ribosyl)imidazole-4-carboxamide + L-glutamate + H(+). It catalyses the reaction L-glutamine + H2O = L-glutamate + NH4(+). It functions in the pathway amino-acid biosynthesis; L-histidine biosynthesis; L-histidine from 5-phospho-alpha-D-ribose 1-diphosphate: step 5/9. In terms of biological role, IGPS catalyzes the conversion of PRFAR and glutamine to IGP, AICAR and glutamate. The HisH subunit catalyzes the hydrolysis of glutamine to glutamate and ammonia as part of the synthesis of IGP and AICAR. The resulting ammonia molecule is channeled to the active site of HisF. This Vibrio parahaemolyticus serotype O3:K6 (strain RIMD 2210633) protein is Imidazole glycerol phosphate synthase subunit HisH.